A 555-amino-acid polypeptide reads, in one-letter code: Formate--tetrahydrofolate ligase (555 aa).

65–72 (TPAGEGKT) provides a ligand contact to ATP.

This sequence belongs to the formate--tetrahydrofolate ligase family.

The catalysed reaction is (6S)-5,6,7,8-tetrahydrofolate + formate + ATP = (6R)-10-formyltetrahydrofolate + ADP + phosphate. It participates in one-carbon metabolism; tetrahydrofolate interconversion. This Thermoanaerobacter pseudethanolicus (strain ATCC 33223 / 39E) (Clostridium thermohydrosulfuricum) protein is Formate--tetrahydrofolate ligase.